Here is a 434-residue protein sequence, read N- to C-terminus: Enolase (434 aa).

Residue Gln-166 coordinates (2R)-2-phosphoglycerate. The active-site Proton donor is Glu-208. Residues Asp-245, Glu-290, and Asp-317 each coordinate Mg(2+). (2R)-2-phosphoglycerate is bound by residues Lys-342, Arg-371, Ser-372, and Lys-393. Residue Lys-342 is the Proton acceptor of the active site.

This sequence belongs to the enolase family. Mg(2+) serves as cofactor.

The protein resides in the cytoplasm. It is found in the secreted. The protein localises to the cell surface. It catalyses the reaction (2R)-2-phosphoglycerate = phosphoenolpyruvate + H2O. The protein operates within carbohydrate degradation; glycolysis; pyruvate from D-glyceraldehyde 3-phosphate: step 4/5. Functionally, catalyzes the reversible conversion of 2-phosphoglycerate (2-PG) into phosphoenolpyruvate (PEP). It is essential for the degradation of carbohydrates via glycolysis. This is Enolase from Caldicellulosiruptor saccharolyticus (strain ATCC 43494 / DSM 8903 / Tp8T 6331).